The following is a 333-amino-acid chain: Eukaryotic translation initiation factor 3 subunit H-B (333 aa).

An MPN domain is found at 20–154 (IQIEGLVVMK…LKAYRLTPKL (135 aa)). Residues 249–295 (SKQQQQKHQYVQRRQQENAQRQSRGEPPLPEEDLTKMFKPPQPPPRM) form a disordered region. Positions 250–261 (KQQQQKHQYVQR) are enriched in low complexity.

Belongs to the eIF-3 subunit H family. Component of the eukaryotic translation initiation factor 3 (eIF-3) complex, which is composed of 13 subunits: eif3a, eif3b, eif3c, eif3d, eif3e, eif3f, eif3g, eif3h, eif3i, eif3j, eif3k, eif3l and eif3m.

It is found in the cytoplasm. Functionally, component of the eukaryotic translation initiation factor 3 (eIF-3) complex, which is involved in protein synthesis of a specialized repertoire of mRNAs and, together with other initiation factors, stimulates binding of mRNA and methionyl-tRNAi to the 40S ribosome. The eIF-3 complex specifically targets and initiates translation of a subset of mRNAs involved in cell proliferation. The polypeptide is Eukaryotic translation initiation factor 3 subunit H-B (eif3hb) (Danio rerio (Zebrafish)).